Here is a 499-residue protein sequence, read N- to C-terminus: Endoglucanase (499 aa).

An N-terminal signal peptide occupies residues 1 to 29 (MKRSISIFITCLLITLLTMGGMIASPASA). Residues H65, 69–70 (WY), Y96, and H131 contribute to the substrate site. E169 serves as the catalytic Proton donor. Y231 is a substrate binding site. E257 acts as the Nucleophile in catalysis. Residues 263 to 264 (AS), W291, and 296 to 298 (KQE) contribute to the substrate site. A CBM3 domain is found at 350–499 (QENGISVQYR…GKLIWGTEPN (150 aa)).

The protein belongs to the glycosyl hydrolase 5 (cellulase A) family.

It carries out the reaction Endohydrolysis of (1-&gt;4)-beta-D-glucosidic linkages in cellulose, lichenin and cereal beta-D-glucans.. The polypeptide is Endoglucanase (eglS) (Bacillus subtilis (strain 168)).